A 508-amino-acid chain; its full sequence is Serine/threonine protein kinase OSK3 (508 aa).

One can recognise a Protein kinase domain in the interval 17 to 269 (YNLGRTLGIG…IREIREHQWF (253 aa)). Residues 23 to 31 (LGIGSFGKV) and K46 contribute to the ATP site. D140 serves as the catalytic Proton acceptor. One can recognise a UBA domain in the interval 290 to 330 (MIDEDTLQDVVNLGYGKDHVCESLRNRLQNEATVAYYLLLD). The KA1 domain occupies 459-507 (NGRLPAVIKFEIQLYKTRDEKYLLDMQRVTGPQLLFLDFCADFLTKLRV).

Belongs to the protein kinase superfamily. Ser/Thr protein kinase family. Interacts with HDR1. As to expression, strongly expressed in immature seeds. Mostly expressed in panicles, and to a lower extent, in leaf sheaths.

The protein localises to the nucleus. It carries out the reaction L-seryl-[protein] + ATP = O-phospho-L-seryl-[protein] + ADP + H(+). The catalysed reaction is L-threonyl-[protein] + ATP = O-phospho-L-threonyl-[protein] + ADP + H(+). This chain is Serine/threonine protein kinase OSK3, found in Oryza sativa subsp. indica (Rice).